Reading from the N-terminus, the 180-residue chain is Peroxisome assembly protein 22 (180 aa).

A helical membrane pass occupies residues 15–32 (LGIVGTAIAVLVTSYYIY).

It belongs to the peroxin-22 family.

It localises to the peroxisome membrane. Functionally, involved in peroxisome biogenesis. The sequence is that of Peroxisome assembly protein 22 (PEX22) from Saccharomyces cerevisiae (strain ATCC 204508 / S288c) (Baker's yeast).